We begin with the raw amino-acid sequence, 253 residues long: MLIEQFICREDNFGVLIHDERSGYTAAIDAPESKAICSALKRRNWTLQTIFVTHHHHDHIEALAELKQIYKAVVIGPEAEKEKIGHLDQALQPDESLFFGTHTLLALSTPGHTLGSLSYYFPQENLLFSGDTLFSLGCGRLFEGTPAQMLNSFKKLRQLPDETLLYCGHEYTKTNALFALTLDSHNQKLHQRVEDVFLLRAKNAMTLPVTLGQEKATNPFLRWDDRTLRKNLAMEKETDEEVFAEIRKRKDNF.

7 residues coordinate Zn(2+): His54, His56, Asp58, His59, His112, Asp131, and His169.

The protein belongs to the metallo-beta-lactamase superfamily. Glyoxalase II family. As to quaternary structure, monomer. Requires Zn(2+) as cofactor.

The catalysed reaction is an S-(2-hydroxyacyl)glutathione + H2O = a 2-hydroxy carboxylate + glutathione + H(+). The protein operates within secondary metabolite metabolism; methylglyoxal degradation; (R)-lactate from methylglyoxal: step 2/2. Thiolesterase that catalyzes the hydrolysis of S-D-lactoyl-glutathione to form glutathione and D-lactic acid. The chain is Hydroxyacylglutathione hydrolase from Bartonella quintana (strain Toulouse) (Rochalimaea quintana).